A 223-amino-acid chain; its full sequence is Adenylate kinase (223 aa).

10–15 (GAGKGT) contacts ATP. The NMP stretch occupies residues 30–59 (STGDILRQAVKEGTEVGKIAGELMKAGKLI). Residues Thr31, Arg36, 57–59 (KLI), 85–88 (GFPR), and Gln92 each bind AMP. Residues 126–163 (GRYVCAQCGAGYHDEFKRPHKEGVCDICGSTEFKRRPD) form an LID region. Arg127 is an ATP binding site. Positions 130, 133, 150, and 153 each coordinate Zn(2+). AMP is bound by residues Arg160 and Arg172. Residue Leu200 coordinates ATP.

Belongs to the adenylate kinase family. In terms of assembly, monomer.

The protein resides in the cytoplasm. The enzyme catalyses AMP + ATP = 2 ADP. It participates in purine metabolism; AMP biosynthesis via salvage pathway; AMP from ADP: step 1/1. Functionally, catalyzes the reversible transfer of the terminal phosphate group between ATP and AMP. Plays an important role in cellular energy homeostasis and in adenine nucleotide metabolism. The sequence is that of Adenylate kinase from Zymomonas mobilis subsp. mobilis (strain ATCC 31821 / ZM4 / CP4).